The primary structure comprises 172 residues: Ribosome maturation factor RimM (172 aa).

One can recognise a PRC barrel domain in the interval 95 to 168 (DDGEFYYHEI…RVDVEILEGL (74 aa)).

Belongs to the RimM family. Binds ribosomal protein uS19.

The protein localises to the cytoplasm. Its function is as follows. An accessory protein needed during the final step in the assembly of 30S ribosomal subunit, possibly for assembly of the head region. Essential for efficient processing of 16S rRNA. May be needed both before and after RbfA during the maturation of 16S rRNA. It has affinity for free ribosomal 30S subunits but not for 70S ribosomes. The chain is Ribosome maturation factor RimM from Streptococcus pneumoniae (strain P1031).